A 395-amino-acid chain; its full sequence is 1-deoxy-D-xylulose 5-phosphate reductoisomerase (395 aa).

Positions 10, 11, 12, 13, 38, and 123 each coordinate NADPH. Residue Lys124 participates in 1-deoxy-D-xylulose 5-phosphate binding. Glu125 contacts NADPH. Position 149 (Asp149) interacts with Mn(2+). Ser150, Glu151, Ser185, and His208 together coordinate 1-deoxy-D-xylulose 5-phosphate. Position 151 (Glu151) interacts with Mn(2+). Gly214 contributes to the NADPH binding site. 1-deoxy-D-xylulose 5-phosphate is bound by residues Ser221, Asn226, Lys227, and Glu230. A Mn(2+)-binding site is contributed by Glu230.

Belongs to the DXR family. Mg(2+) is required as a cofactor. Requires Mn(2+) as cofactor.

The catalysed reaction is 2-C-methyl-D-erythritol 4-phosphate + NADP(+) = 1-deoxy-D-xylulose 5-phosphate + NADPH + H(+). It participates in isoprenoid biosynthesis; isopentenyl diphosphate biosynthesis via DXP pathway; isopentenyl diphosphate from 1-deoxy-D-xylulose 5-phosphate: step 1/6. Catalyzes the NADPH-dependent rearrangement and reduction of 1-deoxy-D-xylulose-5-phosphate (DXP) to 2-C-methyl-D-erythritol 4-phosphate (MEP). The polypeptide is 1-deoxy-D-xylulose 5-phosphate reductoisomerase (Shewanella woodyi (strain ATCC 51908 / MS32)).